A 420-amino-acid chain; its full sequence is MGIKNLYKRGVMGLYGVAYAVAALAMTVTLDVSTVAAHGERSQEPFLRMRTVQWYDIKWGPEVTKVNENAKITGKFHLAEDWPRAAAQPDFSFFNVGSPSPVFVRLSTKINGHPWFISGPLQIGRDYEFEVNLRARIPGRHHMHAMLNVKDAGPIAGPGAWMNITGSWDDFTNPLKLLTGETIDSETFNLSNGIFWHVVWMSIGIFWIGVFTARPMFLPRSRVLLAYGDDLLMDPMDKKITWVLAILTLALVWGGYRYTENKHPYTVPIQAGQSKVAALPVAPNPVSIVITDANYDVPGRALRVTMEVTNNGDIPVTFGEFTTAGIRFINSTGRKYLDPQYPRELIAVGLNFDDESAIQPGQTKELKMEAKDALWEIQRLMALLGDPESRFGGLLMSWDAEGNRHINSIAGPVIPVFTKL.

The first 25 residues, 1 to 25 (MGIKNLYKRGVMGLYGVAYAVAALA), serve as a signal peptide directing secretion. Residues His38, His142, and His144 each coordinate Cu cation. 2 consecutive transmembrane segments (helical) span residues 193–213 (GIFW…VFTA) and 240–260 (ITWV…RYTE).

In terms of assembly, the soluble ammonia monooxygenase is a nonamer composed of three alpha subunits (AmoA), three beta subunits (AmoB) and three gamma subunits (Cytochrome c1 PetC). Requires Cu(2+) as cofactor.

The protein resides in the cell membrane. It is found in the cytoplasm. It catalyses the reaction AH2 + NH4(+) + O2 = hydroxylamine + A + H2O + H(+). In vitro, inhibited by acetylene. Part of the ammonia monooxygenase complex, which catalyzes the oxidation of ammonia to hydroxylamine, the first reaction in the process of ammonia oxidation to nitrite. In Nitrosomonas europaea (strain ATCC 19718 / CIP 103999 / KCTC 2705 / NBRC 14298), this protein is Ammonia monooxygenase beta subunit.